Reading from the N-terminus, the 372-residue chain is MNGSGSQGAENTSQEGGSGGWQPEAVLVPLFFALIFLVGTVGNALVLAVLLRGGQAVSTTNLFILNLGVADLCFILCCVPFQATIYTLDDWVFGSLLCKAVHFLIFLTMHASSFTLAAVSLDRYLAIRYPLHSRELRTPRNALAAIGLIWGLALLFSGPYLSYYRQSQLANLTVCHPAWSAPRRRAMDLCTFVFSYLLPVLVLSLTYARTLRYLWRTVDPVTAGSGSQRAKRKVTRMIIIVAVLFCLCWMPHHALILCVWFGRFPLTRATYALRILSHLVSYANSCVNPIVYALVSKHFRKGFRKICAGLLRPAPRRASGRVSILAPGNHSGSMLEQESTDLTQVSEAAGPLVPPPALPNCTASSRTLDPAC.

Residues 1–28 (MNGSGSQGAENTSQEGGSGGWQPEAVLV) lie on the Extracellular side of the membrane. N-linked (GlcNAc...) asparagine glycosylation is found at Asn2 and Asn11. Residues 29–49 (PLFFALIFLVGTVGNALVLAV) traverse the membrane as a helical segment. Residues 50-60 (LLRGGQAVSTT) are Cytoplasmic-facing. The chain crosses the membrane as a helical span at residues 61-81 (NLFILNLGVADLCFILCCVPF). The Extracellular segment spans residues 82 to 99 (QATIYTLDDWVFGSLLCK). Cys98 and Cys175 are disulfide-bonded. A helical membrane pass occupies residues 100-121 (AVHFLIFLTMHASSFTLAAVSL). At 122–141 (DRYLAIRYPLHSRELRTPRN) the chain is on the cytoplasmic side. A helical membrane pass occupies residues 142 to 162 (ALAAIGLIWGLALLFSGPYLS). Over 163–187 (YYRQSQLANLTVCHPAWSAPRRRAM) the chain is Extracellular. Residues 188–208 (DLCTFVFSYLLPVLVLSLTYA) form a helical membrane-spanning segment. The Cytoplasmic segment spans residues 209–237 (RTLRYLWRTVDPVTAGSGSQRAKRKVTRM). Residues 238-258 (IIIVAVLFCLCWMPHHALILC) traverse the membrane as a helical segment. Topologically, residues 259–260 (VW) are extracellular. A helical transmembrane segment spans residues 261 to 281 (FGRFPLTRATYALRILSHLVS). Residues 282–372 (YANSCVNPIV…ASSRTLDPAC (91 aa)) lie on the Cytoplasmic side of the membrane. The tract at residues 353–372 (VPPPALPNCTASSRTLDPAC) is disordered. Residues 361–372 (CTASSRTLDPAC) are compositionally biased toward polar residues.

Belongs to the G-protein coupled receptor 1 family.

It localises to the cell membrane. Receptor for the hormone galanin, GALP and spexin-1. The activity of this receptor is mediated by G proteins that activate the phospholipase C/protein kinase C pathway (via G(q)) and that inhibit adenylyl cyclase (via G(i)). The sequence is that of Galanin receptor type 2 (Galr2) from Rattus norvegicus (Rat).